Here is a 480-residue protein sequence, read N- to C-terminus: Trigger factor (480 aa).

Residues 169–264 form the PPIase FKBP-type domain; sequence GDIAVVDFKG…LKELKEKELP (96 aa). The disordered stretch occupies residues 441-480; sequence PEGSLSPAEETEAAESDADADVSQTEQENSEPSTTEVTEG. The span at 449–460 shows a compositional bias: acidic residues; sequence EETEAAESDADA. A compositionally biased stretch (polar residues) spans 462–480; sequence VSQTEQENSEPSTTEVTEG.

The protein belongs to the FKBP-type PPIase family. Tig subfamily.

It is found in the cytoplasm. The enzyme catalyses [protein]-peptidylproline (omega=180) = [protein]-peptidylproline (omega=0). In terms of biological role, involved in protein export. Acts as a chaperone by maintaining the newly synthesized protein in an open conformation. Functions as a peptidyl-prolyl cis-trans isomerase. The polypeptide is Trigger factor (Nostoc punctiforme (strain ATCC 29133 / PCC 73102)).